We begin with the raw amino-acid sequence, 340 residues long: MQLSDFDYHLPEALIAQHPPAERGASRLLHVDGMTLSDLSFADLPSRLQAGDLLVFNDTRVIRARLFGEKASGGKVEALIERVLDDHTALAHVRASKSPKPGSRLIFAGRWEAEMVERHDSMFKLRFLAEENVYDILEASGKLPLPPYIERSAEHDDDERYQTVYAREQGAVAAPTAGLHFTDAMLATLQAQGIATAFVTLHVGAGTFQPVKVDNVAEHKMHSEIYDIPQATVDAIAAARARGGRVVAVGTTSVRALESAARHGELKAGRGETDIFITPGYRFRVVDRLLTNFHLPKSTLLMLVSAFAGYDEIFQAYRHAVEKEYRFFSYGDAMLLEKKV.

Belongs to the QueA family. As to quaternary structure, monomer.

The protein localises to the cytoplasm. It carries out the reaction 7-aminomethyl-7-carbaguanosine(34) in tRNA + S-adenosyl-L-methionine = epoxyqueuosine(34) in tRNA + adenine + L-methionine + 2 H(+). It functions in the pathway tRNA modification; tRNA-queuosine biosynthesis. Transfers and isomerizes the ribose moiety from AdoMet to the 7-aminomethyl group of 7-deazaguanine (preQ1-tRNA) to give epoxyqueuosine (oQ-tRNA). This is S-adenosylmethionine:tRNA ribosyltransferase-isomerase from Chromobacterium violaceum (strain ATCC 12472 / DSM 30191 / JCM 1249 / CCUG 213 / NBRC 12614 / NCIMB 9131 / NCTC 9757 / MK).